A 411-amino-acid polypeptide reads, in one-letter code: Argininosuccinate lyase (411 aa).

Belongs to the lyase 1 family. Argininosuccinate lyase subfamily.

The protein localises to the cytoplasm. The catalysed reaction is 2-(N(omega)-L-arginino)succinate = fumarate + L-arginine. The protein operates within amino-acid biosynthesis; L-arginine biosynthesis; L-arginine from L-ornithine and carbamoyl phosphate: step 3/3. The sequence is that of Argininosuccinate lyase from Legionella pneumophila (strain Paris).